Consider the following 335-residue polypeptide: Methionine import ATP-binding protein MetN 1 (335 aa).

One can recognise an ABC transporter domain in the interval 2 to 242 (IEFHNVHKTY…PQHPTTRRFV (241 aa)). 38–45 (GHSGAGKS) is an ATP binding site.

The protein belongs to the ABC transporter superfamily. Methionine importer (TC 3.A.1.24) family. The complex is composed of two ATP-binding proteins (MetN), two transmembrane proteins (MetI) and a solute-binding protein (MetQ).

Its subcellular location is the cell inner membrane. It carries out the reaction L-methionine(out) + ATP + H2O = L-methionine(in) + ADP + phosphate + H(+). The enzyme catalyses D-methionine(out) + ATP + H2O = D-methionine(in) + ADP + phosphate + H(+). Part of the ABC transporter complex MetNIQ involved in methionine import. Responsible for energy coupling to the transport system. The polypeptide is Methionine import ATP-binding protein MetN 1 (Pseudomonas savastanoi pv. phaseolicola (strain 1448A / Race 6) (Pseudomonas syringae pv. phaseolicola (strain 1448A / Race 6))).